Consider the following 503-residue polypeptide: Arabinose import ATP-binding protein AraG 1 (503 aa).

2 ABC transporter domains span residues 5-240 (LRFD…MVGR) and 253-497 (LGDV…LPQG). Residue 37–44 (GENGAGKS) coordinates ATP.

The protein belongs to the ABC transporter superfamily. Arabinose importer (TC 3.A.1.2.2) family. The complex is composed of two ATP-binding proteins (AraG), two transmembrane proteins (AraH) and a solute-binding protein (AraF).

It localises to the cell inner membrane. It catalyses the reaction L-arabinose(out) + ATP + H2O = L-arabinose(in) + ADP + phosphate + H(+). Part of the ABC transporter complex AraFGH involved in arabinose import. Responsible for energy coupling to the transport system. In Burkholderia thailandensis (strain ATCC 700388 / DSM 13276 / CCUG 48851 / CIP 106301 / E264), this protein is Arabinose import ATP-binding protein AraG 1.